The primary structure comprises 330 residues: Aspartate--ammonia ligase (330 aa).

Belongs to the class-II aminoacyl-tRNA synthetase family. AsnA subfamily.

The protein resides in the cytoplasm. It carries out the reaction L-aspartate + NH4(+) + ATP = L-asparagine + AMP + diphosphate + H(+). The protein operates within amino-acid biosynthesis; L-asparagine biosynthesis; L-asparagine from L-aspartate (ammonia route): step 1/1. The chain is Aspartate--ammonia ligase from Streptococcus pyogenes serotype M2 (strain MGAS10270).